Here is a 138-residue protein sequence, read N- to C-terminus: Cysteine desulfuration protein SufE (138 aa).

The active-site Cysteine persulfide intermediate is Cys51.

It belongs to the SufE family. In terms of assembly, homodimer. Interacts with SufS.

Its subcellular location is the cytoplasm. It functions in the pathway cofactor biosynthesis; iron-sulfur cluster biosynthesis. Functionally, participates in cysteine desulfuration mediated by SufS. Cysteine desulfuration mobilizes sulfur from L-cysteine to yield L-alanine and constitutes an essential step in sulfur metabolism for biosynthesis of a variety of sulfur-containing biomolecules. Functions as a sulfur acceptor for SufS, by mediating the direct transfer of the sulfur atom from the S-sulfanylcysteine of SufS, an intermediate product of cysteine desulfuration process. This is Cysteine desulfuration protein SufE from Cronobacter sakazakii (strain ATCC BAA-894) (Enterobacter sakazakii).